Reading from the N-terminus, the 408-residue chain is Peptidase T (408 aa).

Residue His78 participates in Zn(2+) binding. The active site involves Asp80. Position 141 (Asp141) interacts with Zn(2+). Glu175 acts as the Proton acceptor in catalysis. Residues Glu176, Asp198, and His380 each contribute to the Zn(2+) site.

Belongs to the peptidase M20B family. Zn(2+) serves as cofactor.

Its subcellular location is the cytoplasm. It carries out the reaction Release of the N-terminal residue from a tripeptide.. Its function is as follows. Cleaves the N-terminal amino acid of tripeptides. This is Peptidase T from Clostridium botulinum (strain Okra / Type B1).